The chain runs to 358 residues: uncharacterized protein (358 aa).

It belongs to the serpin family. Poxviruses subfamily.

This is an uncharacterized protein from Fowlpox virus (strain NVSL) (FPV).